A 219-amino-acid polypeptide reads, in one-letter code: Thiopurine S-methyltransferase (219 aa).

The S-adenosyl-L-methionine site is built by Trp10, Leu45, Glu66, and Arg123.

The protein belongs to the class I-like SAM-binding methyltransferase superfamily. TPMT family.

It localises to the cytoplasm. The catalysed reaction is S-adenosyl-L-methionine + a thiopurine = S-adenosyl-L-homocysteine + a thiopurine S-methylether.. The polypeptide is Thiopurine S-methyltransferase (Shewanella frigidimarina (strain NCIMB 400)).